The chain runs to 221 residues: MSGWADERGGEGDGRIYVGNLPTDVREKDLEDLFYKYGRIREIELKNRHGLVPFAFVRFEDPRDAEDAIYGRNGYDYGQCRLRVEFPRTYGGRGGWPRGGRNGPPTRRSDFRVLVSGLPPSGSWQDLKDHMREAGDVCYADVQKDGVGMVEYLRKEDMEYALRKLDDTKFRSHEGETSYIRVYPERSTSYGYSRSRSGSRGRDSPYQSRGSPHYFSPFRPY.

2 RRM domains span residues 14-89 and 111-187; these read GRIY…FPRT and FRVL…PERS. Lysine 36 is covalently cross-linked (Glycyl lysine isopeptide (Lys-Gly) (interchain with G-Cter in SUMO2)). The interval 188–200 is interaction with SAFB1; the sequence is TSYGYSRSRSGSR. A Phosphoserine modification is found at serine 189. Positions 189 to 198 are enriched in low complexity; it reads SYGYSRSRSG. The interval 189-221 is disordered; that stretch reads SYGYSRSRSGSRGRDSPYQSRGSPHYFSPFRPY. Tyrosine 192 is subject to Phosphotyrosine. A phosphoserine mark is found at serine 193, serine 195, serine 204, serine 208, and serine 211. The residue at position 214 (tyrosine 214) is a Phosphotyrosine. Residue serine 216 is modified to Phosphoserine.

This sequence belongs to the splicing factor SR family. As to quaternary structure, interacts with KHDRBS3. Interacts with HABP4. Interacts with NOL3/ARC/NOP30. Interacts with NSEP1/YB-1/YB1. Interacts with SAFB/SAFB1. Interacts with SRSF6/SFRS6. Interacts with TRA2B/SFRS10. Interacts with C1QBP. May also interact with DUSP11/PIR1. Extensively phosphorylated on serine residues in the RS domain. In terms of tissue distribution, expressed at high levels in the heart, kidney, pancreas and placenta, and at lower levels in the brain, liver, lung and skeletal muscle.

It localises to the nucleus. Functionally, plays a role in constitutive splicing and can modulate the selection of alternative splice sites. Represses the splicing of MAPT/Tau exon 10. The protein is Serine/arginine-rich splicing factor 9 (SRSF9) of Homo sapiens (Human).